A 189-amino-acid chain; its full sequence is dCTP deaminase (189 aa).

DCTP contacts are provided by residues K112–R117, T136–E138, Q157, Y171, and Q181. The Proton donor/acceptor role is filled by E138.

It belongs to the dCTP deaminase family. In terms of assembly, homotrimer.

The catalysed reaction is dCTP + H2O + H(+) = dUTP + NH4(+). The protein operates within pyrimidine metabolism; dUMP biosynthesis; dUMP from dCTP (dUTP route): step 1/2. Functionally, catalyzes the deamination of dCTP to dUTP. The chain is dCTP deaminase from Xanthomonas campestris pv. campestris (strain 8004).